Consider the following 192-residue polypeptide: Elongation factor P (192 aa).

The protein belongs to the elongation factor P family.

It localises to the cytoplasm. The protein operates within protein biosynthesis; polypeptide chain elongation. In terms of biological role, involved in peptide bond synthesis. Stimulates efficient translation and peptide-bond synthesis on native or reconstituted 70S ribosomes in vitro. Probably functions indirectly by altering the affinity of the ribosome for aminoacyl-tRNA, thus increasing their reactivity as acceptors for peptidyl transferase. This Borrelia hermsii (strain HS1 / DAH) protein is Elongation factor P.